A 422-amino-acid polypeptide reads, in one-letter code: MSSSVAVLWVATSSLNPDPMNNCGLVRVLESSRLFSPCQNQRLNKGKKKQIPTWSSSFVRNRSRRIGVVSSSLVASPSGEIALSSEEKVYNVVLKQAALVNKQLRSSSYDLDVKKPQDVVLPGSLSLLGEAYDRCGEVCAEYAKTFYLGTLLMTPERRKAIWAIYVWCRRTDELVDGPNASHITPMALDRWEARLEDLFRGRPFDMLDAALADTVARYPVDIQPFRDMIEGMRMDLKKSRYQNFDDLYLYCYYVAGTVGLMSVPVMGIDPKSKATTESVYNAALALGIANQLTNILRDVGEDARRGRVYLPQDELAQAGLSDEDIFAGKVTDKWRNFMKMQLKRARMFFDEAEKGVTELSAASRWPVWASLLLYRRILDEIEANDYNNFTKRAYVGKVKKIAALPLAYAKSVLKTSSSRLSI.

The transit peptide at 1-70 directs the protein to the chloroplast; it reads MSSSVAVLWV…NRSRRIGVVS (70 aa).

The protein belongs to the phytoene/squalene synthase family. Monomer. Interacts with OR. Interacts with ORLIKE.

It is found in the plastid. The protein resides in the chloroplast membrane. It carries out the reaction 2 (2E,6E,10E)-geranylgeranyl diphosphate = 15-cis-phytoene + 2 diphosphate. It functions in the pathway carotenoid biosynthesis; phytoene biosynthesis; all-trans-phytoene from geranylgeranyl diphosphate: step 1/1. Functionally, catalyzes the reaction from prephytoene diphosphate to phytoene. The sequence is that of Phytoene synthase 1, chloroplastic from Arabidopsis thaliana (Mouse-ear cress).